The chain runs to 254 residues: NH(3)-dependent NAD(+) synthetase (254 aa).

32-39 provides a ligand contact to ATP; that stretch reads GISGGVDS. Asp-38 is a Mg(2+) binding site. Arg-113 provides a ligand contact to deamido-NAD(+). Thr-133 contacts ATP. A Mg(2+)-binding site is contributed by Glu-138. 2 residues coordinate deamido-NAD(+): Lys-146 and Asp-153. ATP-binding residues include Lys-162 and Ser-184. 244-245 lines the deamido-NAD(+) pocket; it reads HK.

The protein belongs to the NAD synthetase family. In terms of assembly, homodimer.

It carries out the reaction deamido-NAD(+) + NH4(+) + ATP = AMP + diphosphate + NAD(+) + H(+). The protein operates within cofactor biosynthesis; NAD(+) biosynthesis; NAD(+) from deamido-NAD(+) (ammonia route): step 1/1. In terms of biological role, catalyzes the ATP-dependent amidation of deamido-NAD to form NAD. Uses ammonia as a nitrogen source. The protein is NH(3)-dependent NAD(+) synthetase of Thermococcus sibiricus (strain DSM 12597 / MM 739).